Reading from the N-terminus, the 91-residue chain is ATP synthase epsilon chain (91 aa).

The protein belongs to the ATPase epsilon chain family. As to quaternary structure, F-type ATPases have 2 components, CF(1) - the catalytic core - and CF(0) - the membrane proton channel. CF(1) has five subunits: alpha(3), beta(3), gamma(1), delta(1), epsilon(1). CF(0) has three main subunits: a, b and c.

The protein resides in the cell membrane. Produces ATP from ADP in the presence of a proton gradient across the membrane. The protein is ATP synthase epsilon chain (atpC) of Micrococcus luteus (strain ATCC 4698 / DSM 20030 / JCM 1464 / CCM 169 / CCUG 5858 / IAM 1056 / NBRC 3333 / NCIMB 9278 / NCTC 2665 / VKM Ac-2230) (Micrococcus lysodeikticus).